The chain runs to 322 residues: Mas-related G-protein coupled receptor member X4 (322 aa).

Topologically, residues 1-31 (MDPTVPVFGTKLTPINGREETPCYNQTLSFT) are extracellular. An N-linked (GlcNAc...) asparagine glycan is attached at asparagine 25. Residues 32 to 52 (VLTCIISLVGLTGNAVVLWLL) traverse the membrane as a helical segment. Over 53 to 60 (GYRMRRNA) the chain is Cytoplasmic. A helical transmembrane segment spans residues 61–81 (VSIYILNLAAADFLFLSFQII). Residues 82 to 96 (RLPLRLINISHLIRK) lie on the Extracellular side of the membrane. The N-linked (GlcNAc...) asparagine glycan is linked to asparagine 89. Residues 97–117 (ILVSVMTFPYFTGLSMLSAIS) traverse the membrane as a helical segment. The Cytoplasmic segment spans residues 118-137 (TERCLSVLWPIWYRCRRPTH). A helical transmembrane segment spans residues 138-158 (LSAVVCVLLWGLSLLFSMLEW). The Extracellular segment spans residues 159–177 (RFCDFLFSGADSSWCETSD). A helical transmembrane segment spans residues 178 to 198 (FIPVAWLIFLCVVLCVSSLVL). Residues 199–218 (LVRILCGSRKMPLTRLYVTI) are Cytoplasmic-facing. Residues 219–239 (LLTVLVFLLCGLPFGILGALI) form a helical membrane-spanning segment. Residues 240-254 (YRMHLNLEVLYCHVY) lie on the Extracellular side of the membrane. Residues 255–275 (LVCMSLSSLNSSANPIIYFFV) traverse the membrane as a helical segment. The Cytoplasmic segment spans residues 276 to 322 (GSFRQRQNRQNLKLVLQRALQDKPEVDKGEGQLPEESLELSGSRLGP). Residues 299–322 (PEVDKGEGQLPEESLELSGSRLGP) are disordered.

This sequence belongs to the G-protein coupled receptor 1 family. Mas subfamily. Uniquely localized in a subset of small dorsal root and trigeminal sensory neurons.

The protein resides in the cell membrane. Functionally, orphan receptor. Probably involved in the function of nociceptive neurons. May regulate nociceptor function and/or development, including the sensation or modulation of pain. Potently activated by enkephalins. The polypeptide is Mas-related G-protein coupled receptor member X4 (MRGPRX4) (Homo sapiens (Human)).